The sequence spans 414 residues: Transcription factor FAMA (414 aa).

Disordered regions lie at residues 1-61 (MDKD…TPFD) and 142-197 (KEDQ…SQRM). Low complexity-rich tracts occupy residues 12–24 (GESS…NSSG) and 35–49 (QQQQ…QQHQ). Residues 166–175 (RENKNVTKKE) show a composition bias toward basic and acidic residues. Residues 176-185 (VKSKRKRART) show a composition bias toward basic residues. A compositionally biased stretch (basic and acidic residues) spans 187–197 (KTSEEVESQRM). In terms of domain architecture, bHLH spans 194 to 245 (SQRMTHIAVERNRRKQMNEHLRVLRSLMPGSYVQRGDQASIIGGAIEFVREL). Residues 249–253 (LQCLE) carry the LxCxE motif motif.

Interacts with FAMA through its LxCxE motif. Self-interacts. Also interacts with bHLH071 and bHLH093. Interacts with RBR1. As to expression, resctricted to stomatal cell lineages (at protein level). Expressed in roots, leaves, stems, and flowers.

It localises to the nucleus. Its function is as follows. Transcription activator. Together with MYB88 and MYB124, ensures that stomata contain just two guard cells (GCs) by enforcing a single symmetric precursor cell division before stomatal maturity. Together with SPCH and MUTE, regulates the stomata formation. Required to promote differentiation and morphogenesis of stomatal guard cells and to halt proliferative divisions in their immediate precursors. Mediates the formation of stomata. Prevents histone H3K27me3 marks and derepresses stem cell gene expression. The protein is Transcription factor FAMA (FAMA) of Arabidopsis thaliana (Mouse-ear cress).